We begin with the raw amino-acid sequence, 704 residues long: Nucleolar and coiled-body phosphoprotein 1 (704 aa).

The LisH domain occupies 10–42 (VPSDLYPLVLGFLRDNQLSEVASKFAKATGATQ). Position 33 is an N6-acetyllysine (lysine 33). Residues 65 to 638 (KVKLQSNGPV…PFRRVREEEI (574 aa)) are disordered. Glycyl lysine isopeptide (Lys-Gly) (interchain with G-Cter in SUMO2) cross-links involve residues lysine 67 and lysine 76. Acidic serine cluster repeat units follow at residues 84-95 (SSDSSEDSSEEE) and 127-138 (ESSSSEESSEEE). The interval 84 to 570 (SSDSSEDSSE…GKAGKESEEE (487 aa)) is 11 X 12 AA approximate repeats of an acidic serine cluster. Residues serine 87, serine 88, serine 91, and serine 92 each carry the phosphoserine modification. Residues 87–96 (SSEDSSEEED) show a composition bias toward acidic residues. Serine 88 and serine 91 each carry diphosphoserine. 2 stretches are compositionally biased toward low complexity: residues 120-132 (KAAAKASESSSSE) and 149-160 (QQKAVKPQAKAV). The stretch at 170–181 (SESESDSSSEDE) is one Acidic serine cluster 3 repeat. The span at 170 to 182 (SESESDSSSEDEA) shows a compositional bias: acidic residues. 3 stretches are compositionally biased toward low complexity: residues 183–207 (PQTQKPKAAATAAKAPTKAQTKAPA), 215–236 (AQPKAANGKAGSSSSSSSSSSS), and 246–279 (AAPLKKTAPKKQVVAKAPVKVTAAPTQKSSSSED). Glycyl lysine isopeptide (Lys-Gly) (interchain with G-Cter in SUMO2) cross-links involve residues lysine 189 and lysine 200. Acidic serine cluster repeat units follow at residues 231 to 242 (SSSSSSDDSEEE), 274 to 285 (SSSSEDSSSEEE), and 335 to 346 (SSEESDSSSEEE). Residues lysine 352 and lysine 357 each participate in a glycyl lysine isopeptide (Lys-Gly) (interchain with G-Cter in SUMO2) cross-link. Residues serine 372, serine 373, and serine 376 each carry the phosphoserine modification. The stretch at 373–384 (SDSSDSDSSEDE) is one Acidic serine cluster 7 repeat. Residues lysine 399, lysine 405, lysine 410, and lysine 416 each participate in a glycyl lysine isopeptide (Lys-Gly) (interchain with G-Cter in SUMO2) cross-link. Over residues 408–419 (AAKAVATPKQPA) the composition is skewed to low complexity. Lysine 424 carries the post-translational modification N6-acetyllysine; alternate. A Glycyl lysine isopeptide (Lys-Gly) (interchain with G-Cter in SUMO1); alternate cross-link involves residue lysine 424. Residue lysine 424 forms a Glycyl lysine isopeptide (Lys-Gly) (interchain with G-Cter in SUMO2); alternate linkage. A compositionally biased stretch (acidic residues) spans 434-444 (SSEEESSSSEE). One copy of the Acidic serine cluster 8 repeat lies at 434–445 (SSEEESSSSEEE). Glycyl lysine isopeptide (Lys-Gly) (interchain with G-Cter in SUMO2) cross-links involve residues lysine 449 and lysine 461. At serine 465 the chain carries Phosphoserine. Low complexity-rich tracts occupy residues 474–485 (AGGDSSSDSESS) and 504–529 (AGAAVPKPTPVKKAAAESSSSSSSSE). The Acidic serine cluster 9 repeat unit spans residues 479 to 490 (SSDSESSSSEEE). A Glycyl lysine isopeptide (Lys-Gly) (interchain with G-Cter in SUMO2) cross-link involves residue lysine 510. 2 Acidic serine cluster repeats span residues 524–535 (SSSSSEDSSEEE) and 559–570 (QNGKAGKESEEE). Residue serine 567 is modified to Phosphoserine. Residue lysine 584 forms a Glycyl lysine isopeptide (Lys-Gly) (interchain with G-Cter in SUMO2) linkage. At serine 587 the chain carries Phosphoserine. Position 596 is a phosphothreonine (threonine 596). A Glycyl lysine isopeptide (Lys-Gly) (interchain with G-Cter in SUMO2) cross-link involves residue lysine 609. 2 positions are modified to phosphothreonine: threonine 612 and threonine 615. Residue lysine 618 forms a Glycyl lysine isopeptide (Lys-Gly) (interchain with G-Cter in SUMO2) linkage. 2 positions are modified to phosphoserine: serine 627 and serine 648. Lysine 652 participates in a covalent cross-link: Glycyl lysine isopeptide (Lys-Gly) (interchain with G-Cter in SUMO2). Position 668 is an N6-acetyllysine; alternate (lysine 668). Lysine 668 is covalently cross-linked (Glycyl lysine isopeptide (Lys-Gly) (interchain with G-Cter in SUMO2); alternate). Arginine 688 carries the omega-N-methylarginine modification. The residue at position 691 (serine 691) is a Phosphoserine. A Glycyl lysine isopeptide (Lys-Gly) (interchain with G-Cter in SUMO2) cross-link involves residue lysine 700. The residue at position 703 (serine 703) is a Phosphoserine.

It belongs to the NOLC1 family. As to quaternary structure, interacts with RNA polymerase I 194 kDa subunit (RPA194) and with casein kinase-II. Interacts with DKC1/NAP57, NOP58 and fibrillarin. Post-translationally, undergoes rapid and massive phosphorylation/dephosphorylation cycles on CK2 and PKC sites. NOLC1 is one of the mostly phosphorylated proteins in the cell. Ubiquitinated. Monoubiquitination by the BCR(KBTBD8) complex promotes the formation of a NOLC1-TCOF1 complex that acts as a platform to connect RNA polymerase I with enzymes responsible for ribosomal processing and modification, leading to remodel the translational program of differentiating cells in favor of neural crest specification. In terms of processing, pyrophosphorylated by 5-diphosphoinositol pentakisphosphate (5-IP7). Serine pyrophosphorylation is achieved by Mg(2+)-dependent, but enzyme independent transfer of a beta-phosphate from a inositol pyrophosphate to a pre-phosphorylated serine residue.

The protein localises to the cytoplasm. The protein resides in the nucleus. Its subcellular location is the nucleolus. In terms of biological role, nucleolar protein that acts as a regulator of RNA polymerase I by connecting RNA polymerase I with enzymes responsible for ribosomal processing and modification. Required for neural crest specification: following monoubiquitination by the BCR(KBTBD8) complex, associates with TCOF1 and acts as a platform to connect RNA polymerase I with enzymes responsible for ribosomal processing and modification, leading to remodel the translational program of differentiating cells in favor of neural crest specification. Involved in nucleologenesis, possibly by playing a role in the maintenance of the fundamental structure of the fibrillar center and dense fibrillar component in the nucleolus. It has intrinsic GTPase and ATPase activities. This chain is Nucleolar and coiled-body phosphoprotein 1, found in Rattus norvegicus (Rat).